The chain runs to 148 residues: Deoxyuridine 5'-triphosphate nucleotidohydrolase (148 aa).

Substrate is bound by residues 67 to 69 (RSG), N80, 84 to 86 (LID), and M94.

It belongs to the dUTPase family. Mg(2+) is required as a cofactor.

It carries out the reaction dUTP + H2O = dUMP + diphosphate + H(+). Its pathway is pyrimidine metabolism; dUMP biosynthesis; dUMP from dCTP (dUTP route): step 2/2. This enzyme is involved in nucleotide metabolism: it produces dUMP, the immediate precursor of thymidine nucleotides and it decreases the intracellular concentration of dUTP so that uracil cannot be incorporated into DNA. The sequence is that of Deoxyuridine 5'-triphosphate nucleotidohydrolase from Burkholderia cenocepacia (strain ATCC BAA-245 / DSM 16553 / LMG 16656 / NCTC 13227 / J2315 / CF5610) (Burkholderia cepacia (strain J2315)).